The sequence spans 196 residues: Heat shock protein beta-8 (196 aa).

The disordered stretch occupies residues 1 to 35 (MADGQMPFSCHYPSRLRRDPFRDSPLPSRLLDDDF). A phosphoserine mark is found at Ser24 and Ser57. Thr63 bears the Phosphothreonine mark. Residues Arg71 and Arg78 each carry the asymmetric dimethylarginine modification. Residues 74-185 (TAAARFGVPA…PFGESNFNNE (112 aa)) form the sHSP domain. Ser87 is subject to Phosphoserine. The interval 176–196 (PFGESNFNNELPQDSQEVTCT) is disordered. The segment covering 178–196 (GESNFNNELPQDSQEVTCT) has biased composition (polar residues).

The protein belongs to the small heat shock protein (HSP20) family. Monomer. Forms a ternary complex with BAG3 and HSPA1A. Component of the chaperone-assisted selective autophagy (CASA) complex consisting of BAG3, HSPA8/HSC70, HSPB8 and STUB1/CHIP. Interacts with HSPB1. Interacts with DNAJB6. Interacts with BAG3. Phosphorylated.

The protein localises to the cytoplasm. The protein resides in the nucleus. In terms of biological role, involved in the chaperone-assisted selective autophagy (CASA), a crucial process for protein quality control, particularly in mechanical strained cells and tissues such as muscle. Displays temperature-dependent chaperone activity. This chain is Heat shock protein beta-8 (HSPB8), found in Canis lupus familiaris (Dog).